The following is a 407-amino-acid chain: Biflaviolin synthase CYP158A1 (407 aa).

Positions 1-11 are enriched in polar residues; that stretch reads MTQETTTLTGQ. The interval 1-20 is disordered; the sequence is MTQETTTLTGQSPPPVRDWP. Flaviolin is bound by residues arginine 92, tyrosine 199, and 290-291; that span reads HR. Cysteine 356 serves as a coordination point for heme.

The protein belongs to the cytochrome P450 family. Heme is required as a cofactor.

It carries out the reaction 2 flaviolin + 2 reduced [2Fe-2S]-[ferredoxin] + O2 + H(+) = 3,3'-biflaviolin + 2 oxidized [2Fe-2S]-[ferredoxin] + 2 H2O. The enzyme catalyses 2 flaviolin + 2 reduced [2Fe-2S]-[ferredoxin] + O2 + H(+) = 3,8'-biflaviolin + 2 oxidized [2Fe-2S]-[ferredoxin] + 2 H2O. Its pathway is pigment biosynthesis. In terms of biological role, catalyzes oxidative C-C coupling reaction to polymerize flaviolin and form highly conjugated pigments which protect the soil bacterium from deleterious effects of UV irradiation (two isomers of biflaviolin and one triflaviolin). The chain is Biflaviolin synthase CYP158A1 from Streptomyces coelicolor (strain ATCC BAA-471 / A3(2) / M145).